The primary structure comprises 294 residues: Nucleophosmin (294 aa).

At methionine 1 the chain carries N-acetylmethionine. Residues 1–117 (MEDSMDMDMS…PVHISGQHLV (117 aa)) are necessary for interaction with APEX1. A required for interaction with SENP3 region spans residues 1–186 (MEDSMDMDMS…DDDDFDDEEA (186 aa)). Serine 4 is subject to Phosphoserine; by PLK1 and PLK2. Residue serine 10 is modified to Phosphoserine. Residue lysine 27 forms a Glycyl lysine isopeptide (Lys-Gly) (interchain with G-Cter in SUMO2) linkage. The residue at position 32 (lysine 32) is an N6-acetyllysine; alternate. Residue lysine 32 forms a Glycyl lysine isopeptide (Lys-Gly) (interchain with G-Cter in SUMO1); alternate linkage. A Glycyl lysine isopeptide (Lys-Gly) (interchain with G-Cter in SUMO2); alternate cross-link involves residue lysine 32. Phosphoserine is present on serine 43. Position 67 is a phosphotyrosine (tyrosine 67). Serine 70 is subject to Phosphoserine. 2 positions are modified to phosphothreonine: threonine 75 and threonine 95. Acidic residues predominate over residues 120–132 (EEDAESEDEEEED). Residues 120–247 (EEDAESEDEE…PKGPSSVEDI (128 aa)) form a disordered region. Serine 125 is modified (phosphoserine; by CDK2). Phosphoserine is present on residues serine 137 and serine 139. A Glycyl lysine isopeptide (Lys-Gly) (interchain with G-Cter in SUMO2) cross-link involves residue lysine 141. N6-acetyllysine; alternate is present on lysine 150. Lysine 150 participates in a covalent cross-link: Glycyl lysine isopeptide (Lys-Gly) (interchain with G-Cter in SUMO2); alternate. Positions 152–157 (PQKKVK) match the Nuclear localization signal motif. An N6-acetyllysine modification is found at lysine 154. Residues 161-187 (DEDDDDDDEEDDDEDDDDDDFDDEEAE) are compositionally biased toward acidic residues. Residues 187 to 215 (EEKAPVKKSIRDTPAKNAQKSNQNGKDSK) form an interaction with NOP2 region. Over residues 188-200 (EKAPVKKSIRDTP) the composition is skewed to basic and acidic residues. The short motif at 191–197 (PVKKSIR) is the Nuclear localization signal element. Position 199 is a phosphothreonine; by CDK1, CDK2 and CDK6 (threonine 199). A compositionally biased stretch (polar residues) spans 202 to 222 (KNAQKSNQNGKDSKPSSTPRS). The residue at position 207 (serine 207) is an ADP-ribosylserine. An N6-acetyllysine modification is found at lysine 212. Lysine 215 is covalently cross-linked (Glycyl lysine isopeptide (Lys-Gly) (interchain with G-Cter in SUMO2)). Threonine 219 bears the Phosphothreonine; by CDK1 mark. The span at 223–235 (KGQESFKKQEKTP) shows a compositional bias: basic and acidic residues. Position 227 is a phosphoserine (serine 227). Position 229 is an N6-acetyllysine (lysine 229). Lysine 230 is subject to N6-acetyllysine; alternate. A Glycyl lysine isopeptide (Lys-Gly) (interchain with G-Cter in SUMO); alternate cross-link involves residue lysine 230. 2 positions are modified to phosphothreonine; by CDK1: threonine 234 and threonine 237. A phosphoserine mark is found at serine 242 and serine 243. The tract at residues 243 to 294 (SVEDIKAKMQASIEKGGSLPKVEAKFINYVKNCFRMTDQEAIQDLWQWRKSL) is required for nucleolar localization. Lysine 248 is covalently cross-linked (Glycyl lysine isopeptide (Lys-Gly) (interchain with G-Cter in SUMO1); alternate). Residues lysine 248 and lysine 250 each participate in a glycyl lysine isopeptide (Lys-Gly) (interchain with G-Cter in SUMO2); alternate cross-link. Lysine 250 carries the post-translational modification N6-acetyllysine; alternate. The residue at position 254 (serine 254) is a Phosphoserine. Residue lysine 257 is modified to N6-acetyllysine; alternate. Residue lysine 257 forms a Glycyl lysine isopeptide (Lys-Gly) (interchain with G-Cter in SUMO1); alternate linkage. A Glycyl lysine isopeptide (Lys-Gly) (interchain with G-Cter in SUMO2); alternate cross-link involves residue lysine 257. Residue lysine 257 is modified to N6-acetyllysine. At serine 260 the chain carries Phosphoserine. Glycyl lysine isopeptide (Lys-Gly) (interchain with G-Cter in SUMO2); alternate cross-links involve residues lysine 263, lysine 267, and lysine 273. A Glycyl lysine isopeptide (Lys-Gly) (interchain with G-Cter in SUMO); alternate cross-link involves residue lysine 263. N6-acetyllysine; alternate occurs at positions 267 and 273. A Glycyl lysine isopeptide (Lys-Gly) (interchain with G-Cter in SUMO1); alternate cross-link involves residue lysine 267. Residue lysine 267 is modified to N6-succinyllysine; alternate. A Phosphothreonine modification is found at threonine 279. Lysine 292 carries the post-translational modification N6-acetyllysine.

The protein belongs to the nucleoplasmin family. In terms of assembly, decamer formed by two pentameric rings associated in a head-to-head fashion. Disulfide-linked dimers under certain conditions. The SWAP complex consists of NPM1, NCL, PARP1 and SWAP70. Interacts with NSUN2 and SENP3. Interacts with the methylated form of RPS10. Interacts (via N-terminal domain) with APEX1; the interaction is RNA-dependent and decreases in hydrogen peroxide-damaged cells. Interacts with isoform 1 of NEK2. Interacts with ROCK2 and BRCA2. Interacts with RPGR. Interacts with CENPW. Interacts with EIF2AK2/PKR. Interacts with CEBPA (isoform 4). Interacts with DDX31; this interaction prevents interaction between NPM1 and HDM2. Interacts with MYC; competitive with NOP53. Interacts with NOP53; the interaction is direct and competitive with MYC. Interacts with LRRC34. Interacts with RRP1B. Interacts with NPM3. Interacts with ALKBH2. Interacts with TTF1 (via C-terminal region). Interacts with NOP2. Interacts with ARID3C (via REKLES DOMAIN); the interaction mediates ARID3C nuclear shuttling. As to quaternary structure, (Microbial infection) Interacts with hepatitis delta virus S-HDAg. (Microbial infection) Interacts with HTLV1 Rex protein (via N-terminal nuclear localization signal). In terms of processing, acetylated at C-terminal lysine residues, thereby increasing affinity to histones. ADP-ribosylated. Post-translationally, phosphorylated at Ser-4 by PLK1 and PLK2. Phosphorylation at Ser-4 by PLK2 in S phase is required for centriole duplication and is sufficient to trigger centriole replication. Phosphorylation at Ser-4 by PLK1 takes place during mitosis. Phosphorylated by CDK2 at Ser-125 and Thr-199. Phosphorylation at Thr-199 may trigger initiation of centrosome duplication. Phosphorylated by CDK1 at Thr-199, Thr-219, Thr-234 and Thr-237 during cell mitosis. When these four sites are phosphorated, RNA-binding activity seem to be abolished. May be phosphorylated at Ser-70 by NEK2. The Thr-199 phosphorylated form has higher affinity for ROCK2. CDK6 triggers Thr-199 phosphorylation when complexed to Kaposi's sarcoma herpesvirus (KSHV) V-cyclin, leading to viral reactivation by reducing viral LANA levels. In terms of processing, sumoylated by ARF. Ubiquitinated. Ubiquitination leads to proteasomal degradation. Deubiquitinated by USP36.

The protein localises to the nucleus. The protein resides in the nucleolus. It localises to the nucleoplasm. Its subcellular location is the cytoplasm. It is found in the cytoskeleton. The protein localises to the microtubule organizing center. The protein resides in the centrosome. Functionally, involved in diverse cellular processes such as ribosome biogenesis, centrosome duplication, protein chaperoning, histone assembly, cell proliferation, and regulation of tumor suppressors p53/TP53 and ARF. Binds ribosome presumably to drive ribosome nuclear export. Associated with nucleolar ribonucleoprotein structures and bind single-stranded nucleic acids. Acts as a chaperonin for the core histones H3, H2B and H4. Stimulates APEX1 endonuclease activity on apurinic/apyrimidinic (AP) double-stranded DNA but inhibits APEX1 endonuclease activity on AP single-stranded RNA. May exert a control of APEX1 endonuclease activity within nucleoli devoted to repair AP on rDNA and the removal of oxidized rRNA molecules. In concert with BRCA2, regulates centrosome duplication. Regulates centriole duplication: phosphorylation by PLK2 is able to trigger centriole replication. Negatively regulates the activation of EIF2AK2/PKR and suppresses apoptosis through inhibition of EIF2AK2/PKR autophosphorylation. Antagonizes the inhibitory effect of ATF5 on cell proliferation and relieves ATF5-induced G2/M blockade. In complex with MYC enhances the transcription of MYC target genes. May act as chaperonin or cotransporter in the nucleolar localization of transcription termination factor TTF1. This chain is Nucleophosmin, found in Homo sapiens (Human).